A 432-amino-acid chain; its full sequence is Adenylosuccinate synthetase (432 aa).

GTP is bound by residues 12–18 (GDEGKGK) and 40–42 (GHT). Catalysis depends on Asp-13, which acts as the Proton acceptor. Positions 13 and 40 each coordinate Mg(2+). IMP is bound by residues 13–16 (DEGK), 38–41 (NAGH), Thr-129, Arg-143, Gln-224, Thr-239, and Arg-303. His-41 serves as the catalytic Proton donor. 299–305 (VTTGRRR) contacts substrate. Residues Arg-305, 331-333 (KLD), and 413-415 (GVG) contribute to the GTP site.

The protein belongs to the adenylosuccinate synthetase family. In terms of assembly, homodimer. It depends on Mg(2+) as a cofactor.

It localises to the cytoplasm. It carries out the reaction IMP + L-aspartate + GTP = N(6)-(1,2-dicarboxyethyl)-AMP + GDP + phosphate + 2 H(+). The protein operates within purine metabolism; AMP biosynthesis via de novo pathway; AMP from IMP: step 1/2. Functionally, plays an important role in the de novo pathway of purine nucleotide biosynthesis. Catalyzes the first committed step in the biosynthesis of AMP from IMP. This chain is Adenylosuccinate synthetase, found in Mycobacterium marinum (strain ATCC BAA-535 / M).